We begin with the raw amino-acid sequence, 300 residues long: Ribosomal RNA small subunit methyltransferase H (300 aa).

Residues 33–35 (AGH), aspartate 52, phenylalanine 86, aspartate 97, and glutamine 104 contribute to the S-adenosyl-L-methionine site.

Belongs to the methyltransferase superfamily. RsmH family.

It localises to the cytoplasm. The enzyme catalyses cytidine(1402) in 16S rRNA + S-adenosyl-L-methionine = N(4)-methylcytidine(1402) in 16S rRNA + S-adenosyl-L-homocysteine + H(+). In terms of biological role, specifically methylates the N4 position of cytidine in position 1402 (C1402) of 16S rRNA. The sequence is that of Ribosomal RNA small subunit methyltransferase H from Aliarcobacter butzleri (strain RM4018) (Arcobacter butzleri).